The following is a 165-amino-acid chain: DNA mimic protein DMP19 (165 aa).

This sequence belongs to the DMP19-like protein family. In terms of assembly, monomer. Homodimer. The monomeric form of DMP19 interacts with the DNA-binding protein HU homodimer with 1:1 stoichiometry. The dimeric form of DMP19 interacts with the Neisseria hypothetical transcription factor (NHTF) dimer.

Activity can be modulated in vitro by crown ethers, which are small cyclic polyethers that can modify protein surface behavior dramatically by stabilizing either intra- or intermolecular interactions, thereby probably altering the protein's tertiary and quaternary structure. In terms of biological role, acts as a DNA mimic. Interacts with DNA-binding proteins and prevents their binding to DNA by occupying the DNA binding sites on the proteins, acting as a competitive inhibitor. DMP19 is a bifunctional DNA mimic protein involved in controlling nucleoid formation as well as gene regulation. This bifunctionality depends on different oligomeric states. The monomeric form interacts with the DNA-binding protein HU, which prevents HU from binding to DNA and forming nucleoids. The dimeric form interacts with the Neisseria hypothetical transcription factor (NHTF) and prevents NHTF from binding to its DNA-binding sites, thereby blocking its repressor activity and influencing expression of the target genes. DMP19 might use these different oligomerizations to regulate genes in two steps: the monomeric form may first release selected gene regions in chromosomal DNA by preventing HU from binding to DNA and forming nucleoids, then the dimeric form blocks the gene repressor activity of NHTF and ensures the continued expression of NHTF-controlled genes. In Neisseria meningitidis serogroup B (strain ATCC BAA-335 / MC58), this protein is DNA mimic protein DMP19.